We begin with the raw amino-acid sequence, 870 residues long: Aminopeptidase N (870 aa).

Substrate contacts are provided by residues Glu-121 and 261–265 (GAMEN). His-297 lines the Zn(2+) pocket. The active-site Proton acceptor is the Glu-298. Zn(2+) contacts are provided by His-301 and Glu-320.

Belongs to the peptidase M1 family. Requires Zn(2+) as cofactor.

It is found in the cell inner membrane. It carries out the reaction Release of an N-terminal amino acid, Xaa-|-Yaa- from a peptide, amide or arylamide. Xaa is preferably Ala, but may be most amino acids including Pro (slow action). When a terminal hydrophobic residue is followed by a prolyl residue, the two may be released as an intact Xaa-Pro dipeptide.. In terms of biological role, aminopeptidase N is involved in the degradation of intracellular peptides generated by protein breakdown during normal growth as well as in response to nutrient starvation. The protein is Aminopeptidase N (pepN) of Escherichia coli (strain K12).